Here is a 309-residue protein sequence, read N- to C-terminus: tRNA dimethylallyltransferase (309 aa).

Residue 13–20 (GPTGAGKT) participates in ATP binding. 15–20 (TGAGKT) provides a ligand contact to substrate. Interaction with substrate tRNA regions lie at residues 38 to 41 (DSRQ) and 162 to 166 (QRVTR).

This sequence belongs to the IPP transferase family. Monomer. Mg(2+) serves as cofactor.

The enzyme catalyses adenosine(37) in tRNA + dimethylallyl diphosphate = N(6)-dimethylallyladenosine(37) in tRNA + diphosphate. Its function is as follows. Catalyzes the transfer of a dimethylallyl group onto the adenine at position 37 in tRNAs that read codons beginning with uridine, leading to the formation of N6-(dimethylallyl)adenosine (i(6)A). In Nitratidesulfovibrio vulgaris (strain ATCC 29579 / DSM 644 / CCUG 34227 / NCIMB 8303 / VKM B-1760 / Hildenborough) (Desulfovibrio vulgaris), this protein is tRNA dimethylallyltransferase.